Consider the following 432-residue polypeptide: Enolase 2 (432 aa).

Residue Gln-163 participates in (2R)-2-phosphoglycerate binding. Glu-205 (proton donor) is an active-site residue. Asp-242, Glu-287, and Asp-314 together coordinate Mg(2+). Positions 339, 368, 369, and 390 each coordinate (2R)-2-phosphoglycerate. Lys-339 (proton acceptor) is an active-site residue.

It belongs to the enolase family. Homodimer. Probably forms octamers. Mg(2+) is required as a cofactor.

It localises to the cytoplasm. The protein localises to the secreted. Its subcellular location is the cell surface. It catalyses the reaction (2R)-2-phosphoglycerate = phosphoenolpyruvate + H2O. It participates in carbohydrate degradation; glycolysis; pyruvate from D-glyceraldehyde 3-phosphate: step 4/5. Catalyzes the reversible conversion of 2-phosphoglycerate (2-PG) into phosphoenolpyruvate (PEP). It is essential for the degradation of carbohydrates via glycolysis. The sequence is that of Enolase 2 from Lactobacillus gasseri (strain ATCC 33323 / DSM 20243 / BCRC 14619 / CIP 102991 / JCM 1131 / KCTC 3163 / NCIMB 11718 / NCTC 13722 / AM63).